Consider the following 195-residue polypeptide: Packaging protein 2 (195 aa).

Positions 1 to 124 are disordered; that stretch reads MAPKKKLQLP…QEQQQRQGYR (124 aa). The segment covering 15–53 has biased composition (acidic residues); sequence TDEEEYWDSQAEEVLDEEEEMMEDWDSLDEASEAEEVSD. Residues 54-63 show a composition bias toward low complexity; it reads ETPSPSVAFP.

The protein belongs to the adenoviridae splicing factor family. As to quaternary structure, part of a genome packaging complex composed of packaging proteins 1, 2 and 3; this complex specifically binds to the packaging sequence on the left end of viral genomic DNA and performs packaging of the viral genome. Self-assembles into higher-order structures.

Its subcellular location is the host nucleus. Component of the packaging machinery which encapsidates the viral DNA into preformed capsids and transcriptional activator of the viral major late promoter (MLP). Binds, along with packaging proteins 1 and 3, to the specific packaging sequence on the left end of viral genomic DNA and plays an active role in packaging of the viral genome into preformed capsids. Specifically binds to the 5'-TTTG-3' nucleotides of the repeats making up the packaging sequence. Forms a transcription factor called DEF-A through cooperative binding with packaging protein 1. DEF-A binds to downstream elements of the major late promoter (MLP) and stimulates transcription from the MLP after initiation of viral DNA replication. Simultaneously suppresses early gene expression and is thus likely to participate in the early-late switch in the expression pattern of the late viral proteins. May as well enhance transcription from IVa2 and pIX promoters. This chain is Packaging protein 2, found in Homo sapiens (Human).